Consider the following 242-residue polypeptide: MTPDHGPLLYEGKAKRVFAADQPDCVLVEFKNDATAFNALKRAELEGKGRLNCQISARLFEMLEREGVPTHYLGLAAETWMLVQHVDVIPLEVVIRNVATGSLCQQTPIAAGTELSPALLDLYYKDDNLGDPLLSESRLQLLGLISSQQRLEIEQLARRVNQLLLSFFESLDLLLVDFKLELGLNGAGTLLVADEISPDTCRLWDHRNSDPQARILDKDRFRQDLGGVIEAYGEILKRVQGV.

This sequence belongs to the SAICAR synthetase family.

It carries out the reaction 5-amino-1-(5-phospho-D-ribosyl)imidazole-4-carboxylate + L-aspartate + ATP = (2S)-2-[5-amino-1-(5-phospho-beta-D-ribosyl)imidazole-4-carboxamido]succinate + ADP + phosphate + 2 H(+). The protein operates within purine metabolism; IMP biosynthesis via de novo pathway; 5-amino-1-(5-phospho-D-ribosyl)imidazole-4-carboxamide from 5-amino-1-(5-phospho-D-ribosyl)imidazole-4-carboxylate: step 1/2. This is Phosphoribosylaminoimidazole-succinocarboxamide synthase from Prochlorococcus marinus (strain MIT 9303).